The primary structure comprises 952 residues: Plasma membrane ATPase 4 (952 aa).

Residues 1–64 are Cytoplasmic-facing; sequence MAKAISLEEI…EKNESKILKF (64 aa). A helical membrane pass occupies residues 65–84; that stretch reads LGFMWNPLSWVMEAAAVMAI. Residues 85–96 lie on the Extracellular side of the membrane; sequence ALANGDGKPPDW. Residues 97–117 traverse the membrane as a helical segment; the sequence is QDFIGIICLLVINSTISFIEE. Residues 118 to 246 lie on the Cytoplasmic side of the membrane; that stretch reads NNAGNAAAAL…GHFQKVLTAI (129 aa). The chain crosses the membrane as a helical span at residues 247–267; the sequence is GNFCICSIAIGMLVEIIVMYP. Residues 268 to 277 lie on the Extracellular side of the membrane; sequence IQHRKYRDGI. A helical transmembrane segment spans residues 278–299; sequence DNLLVLLIGGIPIAMPTVLSVT. Topologically, residues 300-646 are cytoplasmic; that stretch reads MAIGSHRLSQ…TSRAIFQRMK (347 aa). Catalysis depends on Asp332, which acts as the 4-aspartylphosphate intermediate. 2 residues coordinate Mg(2+): Asp591 and Asp595. The helical transmembrane segment at 647–668 threads the bilayer; the sequence is NYTIYAVSITIRIVFGFMFIAL. The Extracellular segment spans residues 669–673; sequence IWKYD. The helical transmembrane segment at 674 to 696 threads the bilayer; it reads FSAFMVLIIAILNDGTIMTISKD. Residues 697-712 are Cytoplasmic-facing; sequence RVKPSPMPDSWKLKEI. A helical membrane pass occupies residues 713 to 733; it reads FATGVVLGGYQALMTVVFFWA. At 734–754 the chain is on the extracellular side; it reads MHDTDFFSDKFGVKSLRNSDE. Residues 755–775 form a helical membrane-spanning segment; sequence EMMSALYLQVSIISQALIFVT. At 776–787 the chain is on the cytoplasmic side; the sequence is RSRSWSFLERPG. Residues 788–808 form a helical membrane-spanning segment; sequence MLLVIAFMIAQLVATLIAVYA. Topologically, residues 809 to 817 are extracellular; that stretch reads NWAFARVKG. Residues 818 to 838 form a helical membrane-spanning segment; that stretch reads CGWGWAGVIWLYSIIFYLPLD. Over 839-952 the chain is Cytoplasmic; sequence IMKFAIRYIL…IETIQQHYTV (114 aa).

It belongs to the cation transport ATPase (P-type) (TC 3.A.3) family. Type IIIA subfamily. Expressed at high levels in root, stem, leaf and flower.

Its subcellular location is the cell membrane. It carries out the reaction ATP + H2O + H(+)(in) = ADP + phosphate + 2 H(+)(out). In terms of biological role, the plasma membrane ATPase of plants and fungi is a hydrogen ion pump. The proton gradient it generates drives the active transport of nutrients by H(+)-symport. The resulting external acidification and/or internal alkinization may mediate growth responses. The protein is Plasma membrane ATPase 4 (PMA4) of Nicotiana plumbaginifolia (Leadwort-leaved tobacco).